The sequence spans 185 residues: Ribosome-recycling factor (185 aa).

It belongs to the RRF family.

The protein localises to the cytoplasm. Its function is as follows. Responsible for the release of ribosomes from messenger RNA at the termination of protein biosynthesis. May increase the efficiency of translation by recycling ribosomes from one round of translation to another. The sequence is that of Ribosome-recycling factor from Legionella pneumophila (strain Paris).